The sequence spans 110 residues: Putative anti-sigma factor antagonist TM_1442 (110 aa).

The STAS domain maps to 4 to 110 (LKLDIVEQDD…FKITDTVEEA (107 aa)). Ser59 carries the post-translational modification Phosphoserine.

Belongs to the anti-sigma-factor antagonist family. Phosphorylated on a serine residue.

In terms of biological role, in the phosphorylated form it could act as an anti-anti-sigma factor that counteracts an anti-sigma factor and thus releases a sigma factor from inhibition. The chain is Putative anti-sigma factor antagonist TM_1442 from Thermotoga maritima (strain ATCC 43589 / DSM 3109 / JCM 10099 / NBRC 100826 / MSB8).